Reading from the N-terminus, the 90-residue chain is YcgL domain-containing protein Spro_2755 (90 aa).

The 85-residue stretch at 1–85 folds into the YcgL domain; the sequence is MLCVIYRSSK…PLENLLKQHL (85 aa).

The sequence is that of YcgL domain-containing protein Spro_2755 from Serratia proteamaculans (strain 568).